Here is a 308-residue protein sequence, read N- to C-terminus: MAGGRDRGDLAARQLVFLLPEHLKDASKKKKKSSLLFVKLANPHSGEGATYLIDMCLQQLFEIKVFKEKHHSWFINQSVQSGGLLHFATPMDPLFLLLHYLLKAGKEGKYQPLDQVVVDDTFPDCTLLLRFPELEKSLRHVTEEKEVNSKKYYKYSSEKTLKWLEKKVNQTVVALKANNVNVGARVQSSAYFSGGQVSRDKEEDYVRYAHGLISDYIPKELSDDLSKFLKLPEPPASLTNPPSKKLKLSDEPVEAKEDYTKFNTKDLKTGKKNSKMTAAQKALAKVDKSGMKSIDAFFGAKNKKTGKI.

The residue at position 2 (Ala2) is an N-acetylalanine. The residue at position 292 (Lys292) is an N6-acetyllysine. At Ser293 the chain carries Phosphoserine.

Belongs to the RNase H2 subunit B family. In terms of assembly, the RNase H2 complex is a heterotrimer composed of the catalytic subunit RNASEH2A and the non-catalytic subunits RNASEH2B and RNASEH2C.

It localises to the nucleus. In terms of biological role, non catalytic subunit of RNase H2, an endonuclease that specifically degrades the RNA of RNA:DNA hybrids. Participates in DNA replication, possibly by mediating the removal of lagging-strand Okazaki fragment RNA primers during DNA replication. Mediates the excision of single ribonucleotides from DNA:RNA duplexes. This Mus musculus (Mouse) protein is Ribonuclease H2 subunit B (Rnaseh2b).